A 146-amino-acid chain; its full sequence is Holo-[acyl-carrier-protein] synthase (146 aa).

Mg(2+)-binding residues include D9 and E63.

The protein belongs to the P-Pant transferase superfamily. AcpS family. Mg(2+) is required as a cofactor.

It localises to the cytoplasm. The enzyme catalyses apo-[ACP] + CoA = holo-[ACP] + adenosine 3',5'-bisphosphate + H(+). In terms of biological role, transfers the 4'-phosphopantetheine moiety from coenzyme A to a Ser of acyl-carrier-protein. This Burkholderia ambifaria (strain MC40-6) protein is Holo-[acyl-carrier-protein] synthase.